We begin with the raw amino-acid sequence, 919 residues long: Periodic tryptophan protein 2 homolog (919 aa).

5 WD repeats span residues glycine 12–leucine 50, alanine 53–phenylalanine 93, histidine 94–asparagine 132, glycine 142–tyrosine 181, and glycine 186–arginine 225. Residues glutamine 238 to glutamate 267 are disordered. The span at glutamate 240–glycine 251 shows a compositional bias: acidic residues. Basic and acidic residues predominate over residues aspartate 252–glutamate 267. WD repeat units follow at residues glycine 286–serine 325, isoleucine 328–lysine 368, glycine 371–threonine 410, glutamate 413–threonine 452, proline 456–serine 498, glycine 499–glutamate 538, alanine 541–serine 580, alanine 603–arginine 642, and lysine 700–glutamate 740. The disordered stretch occupies residues threonine 882–alanine 919. Over residues glycine 890 to aspartate 900 the composition is skewed to acidic residues. A phosphoserine mark is found at serine 898 and serine 902.

This sequence belongs to the WD repeat PWP2 family. Part of the small subunit (SSU) processome, composed of more than 70 proteins and the RNA chaperone small nucleolar RNA (snoRNA) U3.

The protein localises to the nucleus. The protein resides in the nucleolus. Part of the small subunit (SSU) processome, first precursor of the small eukaryotic ribosomal subunit. During the assembly of the SSU processome in the nucleolus, many ribosome biogenesis factors, an RNA chaperone and ribosomal proteins associate with the nascent pre-rRNA and work in concert to generate RNA folding, modifications, rearrangements and cleavage as well as targeted degradation of pre-ribosomal RNA by the RNA exosome. The sequence is that of Periodic tryptophan protein 2 homolog from Homo sapiens (Human).